Reading from the N-terminus, the 1775-residue chain is ATP-dependent RNA helicase DEAH12, chloroplastic (1775 aa).

The transit peptide at 1–33 directs the protein to the chloroplast; that stretch reads MRNSFPPSDGGRSATDRRQQSSHSSSTNRYNSR. The interval 1–77 is disordered; sequence MRNSFPPSDG…NPSSGYSPPV (77 aa). The segment covering 21–34 has biased composition (low complexity); the sequence is SSHSSSTNRYNSRS. The segment covering 35–60 has biased composition (polar residues); that stretch reads AQSSPPLNHRPTWNQQHSQYPNSNFP. The Helicase ATP-binding domain maps to 316–480; it reads LKKIHREQIM…FFSCGILLVN (165 aa). 329 to 336 provides a ligand contact to ATP; sequence GETGSGKS. Residues 427–430 carry the DEAH box motif; the sequence is DEAH. The Helicase C-terminal domain occupies 510–676; the sequence is DVVKMAVEIH…VALLRMLALG (167 aa). The TRIAD supradomain stretch occupies residues 1560-1767; sequence IEVECPICLS…EPCYAHLRTI (208 aa). Zn(2+) contacts are provided by C1564, C1567, C1580, H1582, C1585, C1588, C1607, C1612, C1652, C1657, C1675, C1678, C1683, C1686, H1691, C1696, C1722, and C1725. The segment at 1564-1612 adopts an RING-type 1 zinc-finger fold; it reads CPICLSEVDDGYSLEGCSHLFCKACLLEQFEASMRNFDAFPILCSHIDC. The IBR-type zinc finger occupies 1631–1696; the sequence is DELFSASLSS…HLEYHPLITC (66 aa). The RING-type 2; atypical zinc-finger motif lies at 1722–1750; sequence CPICKSTIEKTDGCNHMKCRCGKHICWTC. C1735 is a catalytic residue. Zn(2+) is bound by residues C1740 and C1742.

Belongs to the DEAD box helicase family. DEAH subfamily.

Its subcellular location is the plastid. It localises to the chloroplast. The catalysed reaction is ATP + H2O = ADP + phosphate + H(+). This chain is ATP-dependent RNA helicase DEAH12, chloroplastic, found in Arabidopsis thaliana (Mouse-ear cress).